The sequence spans 246 residues: Ly6/PLAUR domain-containing protein 4 (246 aa).

A signal peptide spans 1–26 (MGPQHLRLVQLFCLLGAISTLPRAGA). Asn-117 is a glycosylation site (N-linked (GlcNAc...) asparagine). Residues 142 to 223 (CPTCVGEHMK…LNILEKSQIV (82 aa)) enclose the UPAR/Ly6 domain. Ala-225 carries GPI-anchor amidated alanine lipidation. A propeptide spans 226–246 (ASSRQDPAWGVVLGLLFAFRD) (removed in mature form).

It localises to the cell membrane. This is Ly6/PLAUR domain-containing protein 4 (LYPD4) from Homo sapiens (Human).